The following is a 616-amino-acid chain: Chaperone protein HscA homolog (616 aa).

The protein belongs to the heat shock protein 70 family.

Chaperone involved in the maturation of iron-sulfur cluster-containing proteins. Has a low intrinsic ATPase activity which is markedly stimulated by HscB. This Aliivibrio fischeri (strain ATCC 700601 / ES114) (Vibrio fischeri) protein is Chaperone protein HscA homolog.